Consider the following 135-residue polypeptide: ATP synthase epsilon chain (135 aa).

The protein belongs to the ATPase epsilon chain family. In terms of assembly, F-type ATPases have 2 components, CF(1) - the catalytic core - and CF(0) - the membrane proton channel. CF(1) has five subunits: alpha(3), beta(3), gamma(1), delta(1), epsilon(1). CF(0) has three main subunits: a, b and c.

The protein resides in the cell inner membrane. Its function is as follows. Produces ATP from ADP in the presence of a proton gradient across the membrane. The protein is ATP synthase epsilon chain of Bradyrhizobium sp. (strain BTAi1 / ATCC BAA-1182).